The chain runs to 513 residues: Probable tubulin polyglutamylase ttll-15 (513 aa).

The TTL domain occupies 73–411; it reads VTGSYESAHT…STPITKEADI (339 aa). ATP-binding positions include 216 to 219, Lys229, and Asp231; that span reads QKFV.

Belongs to the tubulin--tyrosine ligase family. In terms of tissue distribution, expressed in hypodermis and pharyngeal muscles.

Its function is as follows. Probable polyglutamylase that forms polyglutamate side chains on tubulin. Probably acts when complexed with other proteins. Appears to be dispensable for polar spindle formation in dividing embryonic cells, for cilia-dependent osmotic avoidance and for male mating behavior. Regulates microtubule dynamics in uterine muscle cells. The sequence is that of Probable tubulin polyglutamylase ttll-15 from Caenorhabditis elegans.